Here is a 549-residue protein sequence, read N- to C-terminus: Chaperonin GroEL (549 aa).

ATP contacts are provided by residues 30–33, Lys-51, 87–91, Gly-415, 479–481, and Asp-495; these read TLGP, DGTTT, and NAA.

This sequence belongs to the chaperonin (HSP60) family. Forms a cylinder of 14 subunits composed of two heptameric rings stacked back-to-back. Interacts with the co-chaperonin GroES.

The protein localises to the cytoplasm. It catalyses the reaction ATP + H2O + a folded polypeptide = ADP + phosphate + an unfolded polypeptide.. Its function is as follows. Together with its co-chaperonin GroES, plays an essential role in assisting protein folding. The GroEL-GroES system forms a nano-cage that allows encapsulation of the non-native substrate proteins and provides a physical environment optimized to promote and accelerate protein folding. The polypeptide is Chaperonin GroEL (Stenotrophomonas maltophilia (strain R551-3)).